Here is a 122-residue protein sequence, read N- to C-terminus: Large ribosomal subunit protein uL14 (122 aa).

Belongs to the universal ribosomal protein uL14 family. As to quaternary structure, part of the 50S ribosomal subunit. Forms a cluster with proteins L3 and L19. In the 70S ribosome, L14 and L19 interact and together make contacts with the 16S rRNA in bridges B5 and B8.

In terms of biological role, binds to 23S rRNA. Forms part of two intersubunit bridges in the 70S ribosome. This is Large ribosomal subunit protein uL14 from Marinomonas sp. (strain MWYL1).